We begin with the raw amino-acid sequence, 768 residues long: Probable dipeptidyl peptidase 4 (768 aa).

A signal peptide spans 1–17 (MKLGKWSVLLLVGCTAA). Residues Asn38, Asn81, Asn104, Asn113, Asn221, Asn282, and Asn468 are each glycosylated (N-linked (GlcNAc...) asparagine). Ser616 acts as the Charge relay system in catalysis. Residue Asn668 is glycosylated (N-linked (GlcNAc...) asparagine). Residues Asp693 and His728 each act as charge relay system in the active site.

Belongs to the peptidase S9B family.

The protein localises to the secreted. The enzyme catalyses Release of an N-terminal dipeptide, Xaa-Yaa-|-Zaa-, from a polypeptide, preferentially when Yaa is Pro, provided Zaa is neither Pro nor hydroxyproline.. Its function is as follows. Extracellular dipeptidyl-peptidase which removes N-terminal dipeptides sequentially from polypeptides having unsubstituted N-termini provided that the penultimate residue is proline. The chain is Probable dipeptidyl peptidase 4 (dpp4) from Aspergillus clavatus (strain ATCC 1007 / CBS 513.65 / DSM 816 / NCTC 3887 / NRRL 1 / QM 1276 / 107).